Here is a 259-residue protein sequence, read N- to C-terminus: Flap endonuclease Xni (259 aa).

Residue aspartate 109 participates in Mg(2+) binding. One can recognise a 5'-3' exonuclease domain in the interval 165 to 255 (VTPAQLTDYW…FNLQDIRFNS (91 aa)). The K(+) site is built by leucine 176, proline 185, valine 187, and isoleucine 190. Positions 189–194 (GIGPKA) are interaction with DNA.

The protein belongs to the Xni family. Requires Mg(2+) as cofactor. It depends on K(+) as a cofactor.

Its function is as follows. Has flap endonuclease activity. During DNA replication, flap endonucleases cleave the 5'-overhanging flap structure that is generated by displacement synthesis when DNA polymerase encounters the 5'-end of a downstream Okazaki fragment. The polypeptide is Flap endonuclease Xni (Vibrio cholerae serotype O1 (strain ATCC 39315 / El Tor Inaba N16961)).